The sequence spans 396 residues: Protein NDRG1-A (396 aa).

The disordered stretch occupies residues 326 to 396; that stretch reads RSRTGSAASS…NSPKSMEVSC (71 aa). Positions 327-340 are enriched in low complexity; it reads SRTGSAASSSSQDG. A run of 4 repeats spans residues 340–349, 350–359, 360–369, and 370–379. The tract at residues 340-379 is 4 X 10 AA tandem repeats of G-[NS]-R-S-R-[AS]-H-T-[DGN]-[DET]; that stretch reads GNRSRSHTNEGSRSRSHTGDGNRSRAHTGDGNRSRSHTDT. Residues 346–377 are compositionally biased toward basic and acidic residues; that stretch reads HTNEGSRSRSHTGDGNRSRAHTGDGNRSRSHT. Over residues 378–390 the composition is skewed to polar residues; sequence DTNNINSDQNSPK.

Belongs to the NDRG family.

Functionally, may be involved in pronephros development, after specification of the pronephros. This is Protein NDRG1-A (ndrg1-a) from Xenopus laevis (African clawed frog).